An 87-amino-acid chain; its full sequence is Transcription factor ILI4 (87 aa).

Residues 1-54 (MSSRRSSRSSVSEEEINELISKLQSLLPSSRRRGANQASTTKLLKETCSYIKSL) form the bHLH domain.

The protein belongs to the bHLH protein family. As to quaternary structure, interacts with LO9-177. Expressed in phloem of leaf blades and sheaths, lamina joints, filaments before anthesis, vasculare bundles of the ovule, lemma and palea, and embryos.

It localises to the cytoplasm. Atypical and probable non DNA-binding bHLH transcription factor that acts as a positive regulator of brassinosteroid (BR) response. Controls lamina inclination by participating in two BR signaling pathways involving BRI1 and RGA1. Involved in the RLI1-dependent modulation of leaf inclination by promoting lamina joint cell elongation, especially in response to phosphate (Pi) availability. The protein is Transcription factor ILI4 (ILI4) of Oryza sativa subsp. japonica (Rice).